We begin with the raw amino-acid sequence, 356 residues long: MLERLQAVEDRYEYLNEQLSDPNVISNATKLREYSKEQAQIEETVQTYRQYKQVTEQLADAKAMLEEKLDDDMYQMVKEELDELSERKAELEERLKILLLPKDPNDDKNVIVEIRGAAGGDEAQLFAADLYKMYHRYAEMQGWKTEVIEAHATELGGYKEIIFMVNGSGAYSKLKYENGAHRVQRVPQTESGGRIHTSTATVAVLPEAEEVEIDIHEKDIRVDTFASSGPGGQSVNTTMSAVRLTHLPTNTVVSCQDEKSQIKNKEKAMKVLRARIFDKVQQEAQAEYAESRKLAVGTGDRSERIRTYNFPQSRVTDHRIGLTLQKLEQVLQGKLDEIIDALVVADQSEAMKKAEE.

Residue Gln-233 is modified to N5-methylglutamine.

It belongs to the prokaryotic/mitochondrial release factor family. Post-translationally, methylated by PrmC. Methylation increases the termination efficiency of RF1.

Its subcellular location is the cytoplasm. Functionally, peptide chain release factor 1 directs the termination of translation in response to the peptide chain termination codons UAG and UAA. In Shouchella clausii (strain KSM-K16) (Alkalihalobacillus clausii), this protein is Peptide chain release factor 1.